Consider the following 198-residue polypeptide: MSKVLYIKANIKNEGESRTFKVSDSFVEEYKKNNPEDEIITLDLYKENIDFLRADDLGKLFGPKDEESKNNSILKYAYQFADADKYIIAAPMWNLSFPAILKAYIDYVSVSGITFKYTAEGPVGLLNNKKAVHIVSRGGGYDNSPYEMGDRYLRTILGFFGIKDIETIAIDNLDVMGVNVEEKVEEGIEKAISLAKKF.

FMN is bound by residues 92 to 95 (MWNL) and 136 to 139 (SRGG).

It belongs to the azoreductase type 1 family. In terms of assembly, homodimer. FMN serves as cofactor.

The catalysed reaction is 2 a quinone + NADH + H(+) = 2 a 1,4-benzosemiquinone + NAD(+). It carries out the reaction N,N-dimethyl-1,4-phenylenediamine + anthranilate + 2 NAD(+) = 2-(4-dimethylaminophenyl)diazenylbenzoate + 2 NADH + 2 H(+). Its function is as follows. Quinone reductase that provides resistance to thiol-specific stress caused by electrophilic quinones. Also exhibits azoreductase activity. Catalyzes the reductive cleavage of the azo bond in aromatic azo compounds to the corresponding amines. The sequence is that of FMN-dependent NADH:quinone oxidoreductase from Clostridium perfringens (strain ATCC 13124 / DSM 756 / JCM 1290 / NCIMB 6125 / NCTC 8237 / Type A).